The primary structure comprises 179 residues: MQKAVVMDEQAIRRALTRIAHEIIERNKGIDGCVLVGIKTRGIYLARRLAERIEQIEGTSVPVGELDITLYRDDLTMKTEDHEPLVKGTNVPFPVSEQKVILVDDVLFTGRTVRAAMDAVMDLGRPARIQLAVLVDRGHRELPIRADFVGKNVPTSSAEVIVVELAEVDGVDQVSIHEK.

The PRPP-binding signature appears at 100 to 112; that stretch reads VILVDDVLFTGRT.

Belongs to the purine/pyrimidine phosphoribosyltransferase family. PyrR subfamily. Homodimer and homohexamer; in equilibrium.

It carries out the reaction UMP + diphosphate = 5-phospho-alpha-D-ribose 1-diphosphate + uracil. In terms of biological role, regulates transcriptional attenuation of the pyrimidine nucleotide (pyr) operon by binding in a uridine-dependent manner to specific sites on pyr mRNA. This disrupts an antiterminator hairpin in the RNA and favors formation of a downstream transcription terminator, leading to a reduced expression of downstream genes. Also displays a weak uracil phosphoribosyltransferase activity which is not physiologically significant. In Geobacillus thermodenitrificans (strain NG80-2), this protein is Bifunctional protein PyrR.